The sequence spans 133 residues: Thioredoxin H2 (133 aa).

Positions 1 to 22 are disordered; that stretch reads MGGALSTVFGSGEDATAAGTES. The region spanning 6–133 is the Thioredoxin domain; the sequence is STVFGSGEDA…LEKKVSKLRA (128 aa). Active-site nucleophile residues include Cys59 and Cys62. A disulfide bond links Cys59 and Cys62.

This sequence belongs to the thioredoxin family. Plant H-type subfamily. As to quaternary structure, interacts with MDH1.

It localises to the cytoplasm. The protein resides in the mitochondrion. Functionally, thiol-disulfide oxidoreductase probably involved in the redox regulation of a number of cytosolic enzymes. Possesses insulin disulfide bonds reducing activity. In Arabidopsis thaliana (Mouse-ear cress), this protein is Thioredoxin H2 (TRX2).